Reading from the N-terminus, the 284-residue chain is MYIISSKNMLLKAQRQSYAVPAFNIHNLETMQVVVETAAELRSPLILAGTPGTYSYAGTGNVVAIARDLAKKWDLPLALHLDHHEDLADITRKVQAGIRSVMIDGSHSPFEENVALVKSVVELSHRYDASVEAELGRLGGVEDDLVVDAKDALYTNPEQAREFVARTGIDSLAVAIGTAHGLYTAEPKLDFERLAAIRDCVDVPLVLHGASGLPDSDIRRAISLGVCKVNVATELKIAFSDALKAYFLENPGANDPRHYMKPAKAAMKEVVRKVIHVCGCEGQL.

Aspartate 82 functions as the Proton donor in the catalytic mechanism. Zn(2+) contacts are provided by histidine 83 and histidine 180. Position 181 (glycine 181) interacts with dihydroxyacetone phosphate. Histidine 208 serves as a coordination point for Zn(2+). Residues 209–211 and 230–233 contribute to the dihydroxyacetone phosphate site; these read GAS and NVAT.

It belongs to the class II fructose-bisphosphate aldolase family. TagBP aldolase GatY subfamily. In terms of assembly, forms a complex with GatZ. Zn(2+) serves as cofactor.

The catalysed reaction is D-tagatofuranose 1,6-bisphosphate = D-glyceraldehyde 3-phosphate + dihydroxyacetone phosphate. The protein operates within carbohydrate metabolism; D-tagatose 6-phosphate degradation; D-glyceraldehyde 3-phosphate and glycerone phosphate from D-tagatose 6-phosphate: step 2/2. Functionally, catalytic subunit of the tagatose-1,6-bisphosphate aldolase GatYZ, which catalyzes the reversible aldol condensation of dihydroxyacetone phosphate (DHAP or glycerone-phosphate) with glyceraldehyde 3-phosphate (G3P) to produce tagatose 1,6-bisphosphate (TBP). Requires GatZ subunit for full activity and stability. Is involved in the catabolism of galactitol. The chain is D-tagatose-1,6-bisphosphate aldolase subunit GatY from Klebsiella pneumoniae subsp. pneumoniae (strain ATCC 700721 / MGH 78578).